We begin with the raw amino-acid sequence, 341 residues long: GTP 3',8-cyclase (341 aa).

One can recognise a Radical SAM core domain in the interval 17 to 235 (TYGRVATDLR…LRTRFELTAE (219 aa)). Arg-26 serves as a coordination point for GTP. [4Fe-4S] cluster is bound by residues Cys-33 and Cys-37. Position 39 (Tyr-39) interacts with S-adenosyl-L-methionine. Cys-40 is a binding site for [4Fe-4S] cluster. Arg-77 serves as a coordination point for GTP. Residue Gly-81 participates in S-adenosyl-L-methionine binding. Thr-108 is a binding site for GTP. Ser-132 provides a ligand contact to S-adenosyl-L-methionine. Residue Lys-169 participates in GTP binding. Met-203 is an S-adenosyl-L-methionine binding site. 2 residues coordinate [4Fe-4S] cluster: Cys-268 and Cys-271. Residue 273-275 (RTR) coordinates GTP. Cys-285 is a binding site for [4Fe-4S] cluster.

The protein belongs to the radical SAM superfamily. MoaA family. As to quaternary structure, monomer and homodimer. Requires [4Fe-4S] cluster as cofactor.

It catalyses the reaction GTP + AH2 + S-adenosyl-L-methionine = (8S)-3',8-cyclo-7,8-dihydroguanosine 5'-triphosphate + 5'-deoxyadenosine + L-methionine + A + H(+). It participates in cofactor biosynthesis; molybdopterin biosynthesis. Functionally, catalyzes the cyclization of GTP to (8S)-3',8-cyclo-7,8-dihydroguanosine 5'-triphosphate. The chain is GTP 3',8-cyclase from Streptomyces coelicolor (strain ATCC BAA-471 / A3(2) / M145).